A 563-amino-acid chain; its full sequence is Envelope glycoprotein (563 aa).

Residues 1 to 18 (MGFTTKIIFLYNLVLVYA) form the signal peptide. Residues 19 to 503 (GFDDPRKAIE…SNPLWTGLQG (485 aa)) are Extracellular-facing. Asn-113, Asn-219, and Asn-229 each carry an N-linked (GlcNAc...) asparagine; by host glycan. A CXXC motif is present at residues 236-239 (CWLC). 3 disulfides stabilise this stretch: Cys-236/Cys-239, Cys-236/Cys-465, and Cys-457/Cys-464. Residues Asn-264, Asn-282, Asn-292, Asn-306, Asn-312, Asn-321, and Asn-339 are each glycosylated (N-linked (GlcNAc...) asparagine; by host). The interval 380-400 (FIPLLAGLGITAAFTTGATGL) is fusion peptide. Coiled coils occupy residues 401–451 (GVSV…LLTA) and 461–497 (QEKC…SNPL). The tract at residues 440 to 456 (LQNRRGLDLLTAEQGGI) is immunosuppression. Positions 457–465 (CLALQEKCC) match the CX6CC motif. N-linked (GlcNAc...) asparagine; by host glycosylation is present at Asn-469. Residues 504-524 (LLPYLLPFLGPLLTLLLLLTI) traverse the membrane as a helical segment. The Cytoplasmic segment spans residues 525 to 563 (GPCIFNRLTAFINDKLNIIHAMVLTQQYQVLRTDEEAQD). The S-palmitoyl cysteine; by host moiety is linked to residue Cys-527. Positions 552 to 555 (YQVL) match the YXXL motif; contains endocytosis signal motif.

The mature envelope protein (Env) consists of a trimer of SU-TM heterodimers attached by a labile interchain disulfide bond. In terms of processing, specific enzymatic cleavages in vivo yield mature proteins. Envelope glycoproteins are synthesized as an inactive precursor that is N-glycosylated and processed likely by host cell furin or by a furin-like protease in the Golgi to yield the mature SU and TM proteins. The cleavage site between SU and TM requires the minimal sequence [KR]-X-[KR]-R. The R-peptide is released from the C-terminus of the cytoplasmic tail of the TM protein upon particle formation as a result of proteolytic cleavage by the viral protease. Cleavage of this peptide is required for TM to become fusogenic. Post-translationally, the CXXC motif is highly conserved across a broad range of retroviral envelope proteins. It is thought to participate in the formation of a labile disulfide bond possibly with the CX6CC motif present in the transmembrane protein. Isomerization of the intersubunit disulfide bond to an SU intrachain disulfide bond is thought to occur upon receptor recognition in order to allow membrane fusion. The transmembrane protein is palmitoylated.

It localises to the virion membrane. It is found in the host cell membrane. Its function is as follows. The surface protein (SU) attaches the virus to the host cell by binding to its receptor. This interaction triggers the refolding of the transmembrane protein (TM) and is thought to activate its fusogenic potential by unmasking its fusion peptide. Fusion occurs at the host cell plasma membrane. The transmembrane protein (TM) acts as a class I viral fusion protein. Under the current model, the protein has at least 3 conformational states: pre-fusion native state, pre-hairpin intermediate state, and post-fusion hairpin state. During viral and target cell membrane fusion, the coiled coil regions (heptad repeats) assume a trimer-of-hairpins structure, positioning the fusion peptide in close proximity to the C-terminal region of the ectodomain. The formation of this structure appears to drive apposition and subsequent fusion of viral and target cell membranes. Membranes fusion leads to delivery of the nucleocapsid into the cytoplasm. In Baboon endogenous virus (strain M7), this protein is Envelope glycoprotein (env).